We begin with the raw amino-acid sequence, 180 residues long: Symerythrin (180 aa).

The 3-(L-phenylalan-2'-yl)-L-valine (Phe-Val) cross-link spans 17 to 127 (FQDAVSHNNT…RRALETALEV (111 aa)). In terms of domain architecture, Ferritin-like diiron spans 21–180 (VSHNNTDANA…RALENLLEVA (160 aa)). Glutamate 37, glutamate 40, glutamate 71, glutamate 128, glutamate 131, glutamate 162, and histidine 165 together coordinate Fe(3+).

Monomer. It depends on Fe(3+) as a cofactor.

The protein resides in the plastid. It localises to the cyanelle. Functionally, exhibits oxidase-like and peroxidase-like activities in vitro. This is Symerythrin from Cyanophora paradoxa.